Reading from the N-terminus, the 153-residue chain is Ubiquitin-conjugating enzyme E2 13 (153 aa).

Residues 3–149 (SLPKRIIKET…AREWTKLYAK (147 aa)) enclose the UBC core domain. Residue cysteine 87 is the Glycyl thioester intermediate of the active site. Residue lysine 92 forms a Glycyl lysine isopeptide (Lys-Gly) (interchain with G-Cter in ubiquitin) linkage.

Belongs to the ubiquitin-conjugating enzyme family. In terms of assembly, heterodimer with MMS2.

It catalyses the reaction S-ubiquitinyl-[E1 ubiquitin-activating enzyme]-L-cysteine + [E2 ubiquitin-conjugating enzyme]-L-cysteine = [E1 ubiquitin-activating enzyme]-L-cysteine + S-ubiquitinyl-[E2 ubiquitin-conjugating enzyme]-L-cysteine.. The protein operates within protein modification; protein ubiquitination. Has a role in the DNA error-free postreplication repair (PRR) pathway. The UBC13/MMS2 heterodimer catalyzes the synthesis of non-canonical poly-ubiquitin chains that are linked through 'Lys-63'. This Saccharomyces cerevisiae (strain ATCC 204508 / S288c) (Baker's yeast) protein is Ubiquitin-conjugating enzyme E2 13 (UBC13).